A 203-amino-acid polypeptide reads, in one-letter code: Outer-membrane lipoprotein carrier protein (203 aa).

The first 21 residues, 1–21 (MKKLILIGCLMAGMNINVAWA), serve as a signal peptide directing secretion.

Belongs to the LolA family. In terms of assembly, monomer.

Its subcellular location is the periplasm. Functionally, participates in the translocation of lipoproteins from the inner membrane to the outer membrane. Only forms a complex with a lipoprotein if the residue after the N-terminal Cys is not an aspartate (The Asp acts as a targeting signal to indicate that the lipoprotein should stay in the inner membrane). The polypeptide is Outer-membrane lipoprotein carrier protein (Photorhabdus laumondii subsp. laumondii (strain DSM 15139 / CIP 105565 / TT01) (Photorhabdus luminescens subsp. laumondii)).